A 355-amino-acid chain; its full sequence is Methylthioribose-1-phosphate isomerase (355 aa).

Substrate-binding positions include 47–49 (RGA), Arg90, and Gln197. The Proton donor role is filled by Asp238. 248 to 249 (NK) contacts substrate.

The protein belongs to the eIF-2B alpha/beta/delta subunits family. MtnA subfamily.

The catalysed reaction is 5-(methylsulfanyl)-alpha-D-ribose 1-phosphate = 5-(methylsulfanyl)-D-ribulose 1-phosphate. It participates in amino-acid biosynthesis; L-methionine biosynthesis via salvage pathway; L-methionine from S-methyl-5-thio-alpha-D-ribose 1-phosphate: step 1/6. Functionally, catalyzes the interconversion of methylthioribose-1-phosphate (MTR-1-P) into methylthioribulose-1-phosphate (MTRu-1-P). The sequence is that of Methylthioribose-1-phosphate isomerase from Herpetosiphon aurantiacus (strain ATCC 23779 / DSM 785 / 114-95).